The sequence spans 85 residues: Putative regulatory protein Dtur_1444 (85 aa).

The protein belongs to the RemA family.

The sequence is that of Putative regulatory protein Dtur_1444 from Dictyoglomus turgidum (strain DSM 6724 / Z-1310).